The primary structure comprises 641 residues: Acetyl-coenzyme A synthetase (641 aa).

Residues 186 to 189 (RGGK) and Thr304 contribute to the CoA site. ATP contacts are provided by residues 380–382 (GEP), 404–409 (DTWWQT), Asp493, and Arg508. A CoA-binding site is contributed by Ser516. ATP is bound at residue Arg519. The Mg(2+) site is built by Val530, His532, and Ile535. At Lys602 the chain carries N6-acetyllysine.

The protein belongs to the ATP-dependent AMP-binding enzyme family. Requires Mg(2+) as cofactor. Acetylated. Deacetylation by the SIR2-homolog deacetylase activates the enzyme.

The catalysed reaction is acetate + ATP + CoA = acetyl-CoA + AMP + diphosphate. In terms of biological role, catalyzes the conversion of acetate into acetyl-CoA (AcCoA), an essential intermediate at the junction of anabolic and catabolic pathways. AcsA undergoes a two-step reaction. In the first half reaction, AcsA combines acetate with ATP to form acetyl-adenylate (AcAMP) intermediate. In the second half reaction, it can then transfer the acetyl group from AcAMP to the sulfhydryl group of CoA, forming the product AcCoA. The protein is Acetyl-coenzyme A synthetase of Gamma-proteobacterium EBAC31A08.